Here is a 131-residue protein sequence, read N- to C-terminus: Acidic leucine-rich nuclear phosphoprotein 32 family member D (131 aa).

5 LRR repeats span residues 18-38 (DVKE…EGLT), 43-64 (ELEL…PKLN), 65-87 (KLKK…AEKC), 89-110 (NLIH…EPLK), and 114-131 (NLES…LNNY).

It belongs to the ANP32 family.

This chain is Acidic leucine-rich nuclear phosphoprotein 32 family member D (ANP32D), found in Homo sapiens (Human).